The sequence spans 162 residues: 2-C-methyl-D-erythritol 2,4-cyclodiphosphate synthase (162 aa).

A divalent metal cation-binding residues include D10 and H12. Residues 10–12 (DVH) and 36–37 (HS) each bind 4-CDP-2-C-methyl-D-erythritol 2-phosphate. An a divalent metal cation-binding site is contributed by H44. Residues 58–60 (DIG), 63–67 (FPDTD), 102–108 (AQAPRMA), 134–137 (TTSE), F141, and R144 each bind 4-CDP-2-C-methyl-D-erythritol 2-phosphate.

It belongs to the IspF family. In terms of assembly, homotrimer. A divalent metal cation is required as a cofactor.

The enzyme catalyses 4-CDP-2-C-methyl-D-erythritol 2-phosphate = 2-C-methyl-D-erythritol 2,4-cyclic diphosphate + CMP. It functions in the pathway isoprenoid biosynthesis; isopentenyl diphosphate biosynthesis via DXP pathway; isopentenyl diphosphate from 1-deoxy-D-xylulose 5-phosphate: step 4/6. Its function is as follows. Involved in the biosynthesis of isopentenyl diphosphate (IPP) and dimethylallyl diphosphate (DMAPP), two major building blocks of isoprenoid compounds. Catalyzes the conversion of 4-diphosphocytidyl-2-C-methyl-D-erythritol 2-phosphate (CDP-ME2P) to 2-C-methyl-D-erythritol 2,4-cyclodiphosphate (ME-CPP) with a corresponding release of cytidine 5-monophosphate (CMP). The sequence is that of 2-C-methyl-D-erythritol 2,4-cyclodiphosphate synthase from Chromohalobacter salexigens (strain ATCC BAA-138 / DSM 3043 / CIP 106854 / NCIMB 13768 / 1H11).